Here is a 287-residue protein sequence, read N- to C-terminus: Ribosomal RNA small subunit methyltransferase A (287 aa).

6 residues coordinate S-adenosyl-L-methionine: N28, L30, G55, E77, D103, and N123.

The protein belongs to the class I-like SAM-binding methyltransferase superfamily. rRNA adenine N(6)-methyltransferase family. RsmA subfamily.

It localises to the cytoplasm. The catalysed reaction is adenosine(1518)/adenosine(1519) in 16S rRNA + 4 S-adenosyl-L-methionine = N(6)-dimethyladenosine(1518)/N(6)-dimethyladenosine(1519) in 16S rRNA + 4 S-adenosyl-L-homocysteine + 4 H(+). Functionally, specifically dimethylates two adjacent adenosines (A1518 and A1519) in the loop of a conserved hairpin near the 3'-end of 16S rRNA in the 30S particle. May play a critical role in biogenesis of 30S subunits. This chain is Ribosomal RNA small subunit methyltransferase A, found in Rhodopseudomonas palustris (strain TIE-1).